Here is a 281-residue protein sequence, read N- to C-terminus: Protoheme IX farnesyltransferase (281 aa).

9 consecutive transmembrane segments (helical) span residues 13 to 33, 38 to 58, 85 to 105, 107 to 127, 132 to 152, 161 to 181, 206 to 226, 227 to 247, and 261 to 281; these read VIWL…GPLV, LIEL…FNMY, ALTF…LWLG, WVTL…TIML, WLNI…GWIM, ILLS…LAYY, IISI…QLYM, AKLI…IVTI, and MFKA…ISRI.

It belongs to the UbiA prenyltransferase family. Protoheme IX farnesyltransferase subfamily.

Its subcellular location is the cell membrane. The catalysed reaction is heme b + (2E,6E)-farnesyl diphosphate + H2O = Fe(II)-heme o + diphosphate. Its pathway is porphyrin-containing compound metabolism; heme O biosynthesis; heme O from protoheme: step 1/1. Its function is as follows. Converts heme B (protoheme IX) to heme O by substitution of the vinyl group on carbon 2 of heme B porphyrin ring with a hydroxyethyl farnesyl side group. This Caldivirga maquilingensis (strain ATCC 700844 / DSM 13496 / JCM 10307 / IC-167) protein is Protoheme IX farnesyltransferase.